A 415-amino-acid polypeptide reads, in one-letter code: All trans-polyprenyl-diphosphate synthase PDSS1 (415 aa).

The disordered stretch occupies residues 16-35; that stretch reads PAARSPGPGSPGRAGPLGPS. Isopentenyl diphosphate is bound by residues lysine 134, arginine 137, and histidine 173. Positions 180 and 184 each coordinate Mg(2+). Arginine 190 is a binding site for isopentenyl diphosphate.

This sequence belongs to the FPP/GGPP synthase family. As to quaternary structure, heterotetramer composed of 2 PDSS1/DPS1 and 2 PDSS2/DLP1 subunits. It depends on Mg(2+) as a cofactor.

It is found in the mitochondrion. The catalysed reaction is 7 isopentenyl diphosphate + (2E,6E)-farnesyl diphosphate = all-trans-decaprenyl diphosphate + 7 diphosphate. It catalyses the reaction 6 isopentenyl diphosphate + (2E,6E)-farnesyl diphosphate = all-trans-nonaprenyl diphosphate + 6 diphosphate. It functions in the pathway cofactor biosynthesis; ubiquinone biosynthesis. Its function is as follows. Heterotetrameric enzyme that catalyzes the condensation of farnesyl diphosphate (FPP), which acts as a primer, and isopentenyl diphosphate (IPP) to produce prenyl diphosphates of varying chain lengths and participates in the determination of the side chain of ubiquinone. Supplies nona and decaprenyl diphosphate, the precursors for the side chain of the isoprenoid quinones ubiquinone-9 (Q9)and ubiquinone-10 (Q10) respectively. The enzyme adds isopentenyl diphosphate molecules sequentially to farnesyl diphosphate with trans stereochemistry. The polypeptide is All trans-polyprenyl-diphosphate synthase PDSS1 (Homo sapiens (Human)).